The sequence spans 283 residues: Protein/nucleic acid deglycase HchA (283 aa).

Zn(2+) is bound by residues histidine 86, glutamate 91, and histidine 123. Catalysis depends on cysteine 185, which acts as the Nucleophile.

It belongs to the peptidase C56 family. HchA subfamily. As to quaternary structure, homodimer.

The protein localises to the cytoplasm. It catalyses the reaction N(omega)-(1-hydroxy-2-oxopropyl)-L-arginyl-[protein] + H2O = lactate + L-arginyl-[protein] + H(+). The enzyme catalyses N(6)-(1-hydroxy-2-oxopropyl)-L-lysyl-[protein] + H2O = lactate + L-lysyl-[protein] + H(+). It carries out the reaction S-(1-hydroxy-2-oxopropyl)-L-cysteinyl-[protein] + H2O = lactate + L-cysteinyl-[protein] + H(+). The catalysed reaction is N(omega)-(1-hydroxy-2-oxoethyl)-L-arginyl-[protein] + H2O = L-arginyl-[protein] + glycolate + H(+). It catalyses the reaction N(6)-(1-hydroxy-2-oxoethyl)-L-lysyl-[protein] + H2O = glycolate + L-lysyl-[protein] + H(+). The enzyme catalyses S-(1-hydroxy-2-oxoethyl)-L-cysteinyl-[protein] + H2O = glycolate + L-cysteinyl-[protein] + H(+). It carries out the reaction N(2)-(1-hydroxy-2-oxopropyl)-dGTP + H2O = lactate + dGTP + H(+). The catalysed reaction is N(2)-(1-hydroxy-2-oxopropyl)-GTP + H2O = lactate + GTP + H(+). It catalyses the reaction N(2)-(1-hydroxy-2-oxopropyl)-GDP + H2O = lactate + GDP + H(+). The enzyme catalyses N(2)-(1-hydroxy-2-oxopropyl)-GMP + H2O = lactate + GMP + H(+). It carries out the reaction N(2)-(1-hydroxy-2-oxoethyl)-dGTP + H2O = dGTP + glycolate + H(+). The catalysed reaction is N(2)-(1-hydroxy-2-oxoethyl)-GTP + H2O = glycolate + GTP + H(+). It catalyses the reaction N(2)-(1-hydroxy-2-oxoethyl)-GDP + H2O = glycolate + GDP + H(+). The enzyme catalyses N(2)-(1-hydroxy-2-oxoethyl)-GMP + H2O = glycolate + GMP + H(+). It carries out the reaction an N(2)-(1-hydroxy-2-oxopropyl)-guanosine in RNA + H2O = a guanosine in RNA + lactate + H(+). The catalysed reaction is an N(2)-(1-hydroxy-2-oxopropyl)-2'-deoxyguanosine in DNA + H2O = a 2'-deoxyguanosine in DNA + lactate + H(+). It catalyses the reaction an N(2)-(1-hydroxy-2-oxoethyl)-guanosine in RNA + H2O = a guanosine in RNA + glycolate + H(+). The enzyme catalyses an N(2)-(1-hydroxy-2-oxoethyl)-2'-deoxyguanosine in DNA + H2O = a 2'-deoxyguanosine in DNA + glycolate + H(+). Its function is as follows. Protein and nucleotide deglycase that catalyzes the deglycation of the Maillard adducts formed between amino groups of proteins or nucleotides and reactive carbonyl groups of glyoxals. Thus, functions as a protein deglycase that repairs methylglyoxal- and glyoxal-glycated proteins, and releases repaired proteins and lactate or glycolate, respectively. Deglycates cysteine, arginine and lysine residues in proteins, and thus reactivates these proteins by reversing glycation by glyoxals. Acts on early glycation intermediates (hemithioacetals and aminocarbinols), preventing the formation of Schiff bases and advanced glycation endproducts (AGE). Also functions as a nucleotide deglycase able to repair glycated guanine in the free nucleotide pool (GTP, GDP, GMP, dGTP) and in DNA and RNA. Is thus involved in a major nucleotide repair system named guanine glycation repair (GG repair), dedicated to reversing methylglyoxal and glyoxal damage via nucleotide sanitization and direct nucleic acid repair. Plays an important role in protecting cells from carbonyl stress. This chain is Protein/nucleic acid deglycase HchA, found in Shigella sonnei (strain Ss046).